The primary structure comprises 692 residues: ATPase synthesis protein 25, mitochondrial (692 aa).

Residues M1–T73 constitute a mitochondrion transit peptide. Disordered stretches follow at residues P44 to W83, R286 to H314, and C338 to A373. Residues G65 to T81 are compositionally biased toward polar residues. Residues T292 to R302 are compositionally biased toward basic and acidic residues. Residues D347 to L357 are compositionally biased toward acidic residues.

Belongs to the ATP25 family.

The protein localises to the mitochondrion inner membrane. Its function is as follows. Probable mitochondrial mRNA stabilization factor. The sequence is that of ATPase synthesis protein 25, mitochondrial (atp25) from Neosartorya fischeri (strain ATCC 1020 / DSM 3700 / CBS 544.65 / FGSC A1164 / JCM 1740 / NRRL 181 / WB 181) (Aspergillus fischerianus).